A 666-amino-acid polypeptide reads, in one-letter code: Probable potassium transport system protein Kup (666 aa).

The next 12 membrane-spanning stretches (helical) occupy residues 16–36 (GFII…LYTM), 58–78 (ISLI…LIAL), 98–118 (ISPW…SDGA), 141–161 (IYQN…VLFG), 165–185 (FGTG…FSFL), 221–241 (IFIL…YSDL), 253–273 (WPFV…WILA), 299–319 (LATL…FTLI), 343–363 (LYIP…VLAF), 373–393 (YGLA…YYLI), 399–419 (PILA…FFLA), and 424–444 (FMHG…VMFI).

The protein belongs to the HAK/KUP transporter (TC 2.A.72) family.

It localises to the cell membrane. It carries out the reaction K(+)(in) + H(+)(in) = K(+)(out) + H(+)(out). In terms of biological role, transport of potassium into the cell. Likely operates as a K(+):H(+) symporter. The chain is Probable potassium transport system protein Kup from Streptococcus pyogenes serotype M28 (strain MGAS6180).